A 197-amino-acid chain; its full sequence is Inner membrane-spanning protein YciB (197 aa).

Transmembrane regions (helical) follow at residues 22-42 (IYSA…YHWF), 48-68 (PSMM…TLIF), 76-96 (WKPS…HLIG), 121-141 (AAWV…AYTF), and 144-164 (EIWV…FLIG).

This sequence belongs to the YciB family.

It localises to the cell inner membrane. Plays a role in cell envelope biogenesis, maintenance of cell envelope integrity and membrane homeostasis. The chain is Inner membrane-spanning protein YciB from Magnetococcus marinus (strain ATCC BAA-1437 / JCM 17883 / MC-1).